The following is a 250-amino-acid chain: tRNA pseudouridine synthase A (250 aa).

The Nucleophile role is filled by D52. Y111 is a substrate binding site.

Belongs to the tRNA pseudouridine synthase TruA family. In terms of assembly, homodimer.

The catalysed reaction is uridine(38/39/40) in tRNA = pseudouridine(38/39/40) in tRNA. Functionally, formation of pseudouridine at positions 38, 39 and 40 in the anticodon stem and loop of transfer RNAs. This chain is tRNA pseudouridine synthase A, found in Methylobacterium sp. (strain 4-46).